Consider the following 257-residue polypeptide: Phosphonates import ATP-binding protein PhnC (257 aa).

Residues 2-246 (IEFRNVSKVY…KFAEIYGDVV (245 aa)) enclose the ABC transporter domain. 35–42 (GLSGAGKS) is a binding site for ATP.

This sequence belongs to the ABC transporter superfamily. Phosphonates importer (TC 3.A.1.9.1) family. In terms of assembly, the complex is composed of two ATP-binding proteins (PhnC), two transmembrane proteins (PhnE) and a solute-binding protein (PhnD).

It localises to the cell membrane. The catalysed reaction is phosphonate(out) + ATP + H2O = phosphonate(in) + ADP + phosphate + H(+). In terms of biological role, part of the ABC transporter complex PhnCDE involved in phosphonates import. Responsible for energy coupling to the transport system. In Bacillus anthracis, this protein is Phosphonates import ATP-binding protein PhnC.